A 409-amino-acid polypeptide reads, in one-letter code: N-carbamoyl-L-amino acid amidohydrolase (409 aa).

A divalent metal cation is bound by residues His-79, Asp-90, Glu-125, and His-189. Positions 192, 225, 273, 286, and 355 each coordinate an N-carbamoyl-L-alpha-amino acid. The segment at 208–325 is involved in dimerization; the sequence is GIAGLIWVKF…TTERLQEMAP (118 aa). His-380 contributes to the a divalent metal cation binding site.

This sequence belongs to the peptidase M20 family. In terms of assembly, homodimer. Requires Mn(2+) as cofactor. Ni(2+) is required as a cofactor. Co(2+) serves as cofactor. The cofactor is Fe(2+).

The catalysed reaction is an N-carbamoyl-L-alpha-amino acid + H2O + 2 H(+) = an L-alpha-amino acid + NH4(+) + CO2. The enzyme catalyses N-carbamoyl-L-methionine + H2O + 2 H(+) = L-methionine + NH4(+) + CO2. It catalyses the reaction N-acetyl-L-methionine + H2O = L-methionine + acetate. It carries out the reaction N-carbamoyl-L-alanine + H2O + 2 H(+) = L-alanine + NH4(+) + CO2. The catalysed reaction is N-carbamoyl-L-glutamate + H2O + 2 H(+) = L-glutamate + NH4(+) + CO2. The enzyme catalyses N-carbamoylglycine + H2O + 2 H(+) = glycine + NH4(+) + CO2. It catalyses the reaction N-carbamoyl-L-leucine + H2O + 2 H(+) = L-leucine + NH4(+) + CO2. Functionally, catalyzes the hydrolysis of aliphatic N-carbamoyl-L-alpha-amino acids to free L-alpha-amino acids. Is strictly L-specific since it is inactive toward N-carbamoyl-D-alpha-amino acids. Is not able to use aromatic N-carbamoyl-L-alpha-amino acids like N-carbamoyl-L-tryptophan and N-carbamoyl-L-phenylalanine as substrates, but is also able to hydrolyze N-acetyl-L-methionine. This chain is N-carbamoyl-L-amino acid amidohydrolase, found in Geobacillus stearothermophilus (Bacillus stearothermophilus).